The chain runs to 162 residues: Peptide deformylase-like (162 aa).

The protein belongs to the polypeptide deformylase family.

This is Peptide deformylase-like from Staphylococcus epidermidis (strain ATCC 35984 / DSM 28319 / BCRC 17069 / CCUG 31568 / BM 3577 / RP62A).